Reading from the N-terminus, the 307-residue chain is Polysialic acid O-acetyltransferase (307 aa).

Residues 1 to 90 (MLRLKTQDSR…LKTQDSRLKT (90 aa)) are compositionally biased toward basic and acidic residues. The segment at 1-95 (MLRLKTQDSR…SRLKTQDSFS (95 aa)) is disordered. Repeat copies occupy residues 3–9 (RLKTQDS), 10–16 (RLKTQDS), 17–23 (RLKTQDS), 24–30 (RLKTQDS), 31–37 (RLKTQDS), 38–44 (RLKTQDS), 45–51 (RLKTQDS), 52–58 (RLKTQDS), 59–65 (RLKTQDS), 66–72 (RLKTQDS), 73–79 (RLKTQDS), 80–86 (RLKTQDS), and 87–93 (RLKTQDS). The interval 3-93 (RLKTQDSRLK…QDSRLKTQDS (91 aa)) is 13 X 7 AA tandem repeat of RLKTQDS encoded by a 7 nucleotide repeat. Residues 208-210 (DGH), arginine 237, lysine 243, lysine 261, and lysine 278 each bind acetyl-CoA.

The protein belongs to the transferase hexapeptide repeat family. Homotrimer. Hexamer formed by two homotrimers.

The enzyme catalyses [N-acetyl-alpha-D-neuraminosyl-(2-&gt;8)](n) + n acetyl-CoA = [N,O(9)-diacetyl-alpha-D-neuraminosyl-(2-&gt;8)](n) + n CoA. It catalyses the reaction [N-acetyl-alpha-D-neuraminosyl-(2-&gt;8)](n) + n acetyl-CoA = [O(7),N-diacetyl-alpha-D-neuraminosyl-(2-&gt;8)](n) + n CoA. Catalyzes the O-acetylation of capsular polymeric sialic acid. Shows high substrate specificity toward polymers of sialic acid that contains a large number of residues. This Escherichia coli O1:K1 / APEC protein is Polysialic acid O-acetyltransferase.